The chain runs to 209 residues: Probable GTP-binding protein EngB (209 aa).

The 192-residue stretch at 12–203 (INLEIIFAGR…RDRLHEMKRD (192 aa)) folds into the EngB-type G domain. Residues 20-27 (GRSNVGKS), 45-49 (GVTLR), 62-65 (DMPG), 142-145 (NKMD), and 179-181 (ISA) contribute to the GTP site. Mg(2+) is bound by residues serine 27 and threonine 47.

The protein belongs to the TRAFAC class TrmE-Era-EngA-EngB-Septin-like GTPase superfamily. EngB GTPase family. It depends on Mg(2+) as a cofactor.

Necessary for normal cell division and for the maintenance of normal septation. This chain is Probable GTP-binding protein EngB, found in Methanosarcina mazei (strain ATCC BAA-159 / DSM 3647 / Goe1 / Go1 / JCM 11833 / OCM 88) (Methanosarcina frisia).